Here is a 397-residue protein sequence, read N- to C-terminus: Phosphoglycerate kinase (397 aa).

Substrate contacts are provided by residues 21–23 (DFN), R36, 59–62 (HCGR), R118, and R151. ATP contacts are provided by residues K201, E323, and 353–356 (GGDT).

The protein belongs to the phosphoglycerate kinase family. In terms of assembly, monomer.

The protein localises to the cytoplasm. It carries out the reaction (2R)-3-phosphoglycerate + ATP = (2R)-3-phospho-glyceroyl phosphate + ADP. The protein operates within carbohydrate degradation; glycolysis; pyruvate from D-glyceraldehyde 3-phosphate: step 2/5. The polypeptide is Phosphoglycerate kinase (Bartonella quintana (strain Toulouse) (Rochalimaea quintana)).